Reading from the N-terminus, the 500-residue chain is Intracellular exo-alpha-(1-&gt;5)-L-arabinofuranosidase (500 aa).

Residues E28, N73, and N173 each coordinate alpha-L-arabinofuranose. E174 (proton donor/acceptor) is an active-site residue. Y245, E293, and Q350 together coordinate alpha-L-arabinofuranose. The active-site Nucleophile is E293.

This sequence belongs to the glycosyl hydrolase 51 family. Homohexamer; trimer of dimers.

The protein localises to the cytoplasm. It catalyses the reaction Hydrolysis of terminal non-reducing alpha-L-arabinofuranoside residues in alpha-L-arabinosides.. It participates in glycan metabolism; L-arabinan degradation. Functionally, involved in the degradation of arabinan and is a key enzyme in the complete degradation of the plant cell wall. Catalyzes the cleavage of terminal alpha-(1-&gt;5)-arabinofuranosyl bonds in different hemicellulosic homopolysaccharides (branched and debranched arabinans). This is Intracellular exo-alpha-(1-&gt;5)-L-arabinofuranosidase (abfA) from Halalkalibacterium halodurans (strain ATCC BAA-125 / DSM 18197 / FERM 7344 / JCM 9153 / C-125) (Bacillus halodurans).